Reading from the N-terminus, the 503-residue chain is MSIKAEEISSLIKQQLEHYDDKLDIEEVGVVTYVGDGIARAHGLNNVLSSELLQFDNGAYGIAQNLESNDVGIIILGKFDDIREGDRVKRTGRIMEVPVGDALIGRVVNPLGQPVDGLGEIKTDKTRPIESKAPGVMQRQSVNQPLQTGIKAIDALVPIGRGQRELVIGDRKTGKTSLAIDTILNQKGQDVICIYVSIGQKESTVRAQVETLKKLGAMDYTIVVEAGPSEPAPMLYIAPYSGIAMGEEFMYAGKDVLVVFDDLSKQAVAYRELSLLLRRPPGREAYPGDVFYLHSRLLERSAKLSKELGGGSLTALPVIQTEAGDISAYIPTNVISITDGQIFLQSDMFFSGTRPAIDAGASVSRVGGAAQIPAMKKVAGTLRTDLASYRELESFAQFGSDLDQATQAKLARGRRTVEVLKQPLHKPVAVEKQVVLLYALTHGFMDAVSVDDIARFEQELYTDFDANHADLLAEIKSTGKLPDENKLQEALQQFASSFSSSNK.

An ATP-binding site is contributed by 169 to 176 (GDRKTGKT).

This sequence belongs to the ATPase alpha/beta chains family. As to quaternary structure, F-type ATPases have 2 components, CF(1) - the catalytic core - and CF(0) - the membrane proton channel. CF(1) has five subunits: alpha(3), beta(3), gamma(1), delta(1), epsilon(1). CF(0) has three main subunits: a(1), b(2) and c(9-12). The alpha and beta chains form an alternating ring which encloses part of the gamma chain. CF(1) is attached to CF(0) by a central stalk formed by the gamma and epsilon chains, while a peripheral stalk is formed by the delta and b chains.

It is found in the cell membrane. It catalyses the reaction ATP + H2O + 4 H(+)(in) = ADP + phosphate + 5 H(+)(out). Its function is as follows. Produces ATP from ADP in the presence of a proton gradient across the membrane. The alpha chain is a regulatory subunit. This is ATP synthase subunit alpha from Lactobacillus delbrueckii subsp. bulgaricus (strain ATCC BAA-365 / Lb-18).